Reading from the N-terminus, the 387-residue chain is Succinate--CoA ligase [ADP-forming] subunit beta (387 aa).

The ATP-grasp domain occupies 9–236 (KELFAKHNVP…KDATDPLELK (228 aa)). Residues lysine 45, 52–54 (GRG), serine 94, and glutamate 99 each bind ATP. 2 residues coordinate Mg(2+): asparagine 191 and aspartate 205. Residues asparagine 256 and 318–320 (GIT) each bind substrate.

It belongs to the succinate/malate CoA ligase beta subunit family. Heterotetramer of two alpha and two beta subunits. Mg(2+) serves as cofactor.

The enzyme catalyses succinate + ATP + CoA = succinyl-CoA + ADP + phosphate. The catalysed reaction is GTP + succinate + CoA = succinyl-CoA + GDP + phosphate. It participates in carbohydrate metabolism; tricarboxylic acid cycle; succinate from succinyl-CoA (ligase route): step 1/1. Succinyl-CoA synthetase functions in the citric acid cycle (TCA), coupling the hydrolysis of succinyl-CoA to the synthesis of either ATP or GTP and thus represents the only step of substrate-level phosphorylation in the TCA. The beta subunit provides nucleotide specificity of the enzyme and binds the substrate succinate, while the binding sites for coenzyme A and phosphate are found in the alpha subunit. This is Succinate--CoA ligase [ADP-forming] subunit beta from Mycolicibacterium gilvum (strain PYR-GCK) (Mycobacterium gilvum (strain PYR-GCK)).